A 488-amino-acid chain; its full sequence is Coiled-coil domain-containing protein 77 (488 aa).

A disordered region spans residues 21–48 (GVAVSGPTKRRGMADSLESTPLPSPEDR). The residue at position 36 (serine 36) is a Phosphoserine. Residue lysine 51 forms a Glycyl lysine isopeptide (Lys-Gly) (interchain with G-Cter in SUMO2) linkage. 2 coiled-coil regions span residues 55 to 118 (SKEL…QVCL) and 208 to 488 (KESS…LRLC). The segment at 192-213 (FKADPKISKRRPSRERKESSEH) is disordered.

The polypeptide is Coiled-coil domain-containing protein 77 (CCDC77) (Homo sapiens (Human)).